A 185-amino-acid chain; its full sequence is TATA-box-binding protein (185 aa).

Tandem repeats lie at residues 3 to 78 (IQNI…REDL) and 94 to 176 (IQNI…AEKI).

This sequence belongs to the TBP family.

General factor that plays a role in the activation of archaeal genes transcribed by RNA polymerase. Binds specifically to the TATA box promoter element which lies close to the position of transcription initiation. In Methanopyrus kandleri (strain AV19 / DSM 6324 / JCM 9639 / NBRC 100938), this protein is TATA-box-binding protein.